Reading from the N-terminus, the 74-residue chain is Translation initiation factor IF-1 (74 aa).

The S1-like domain maps to 1 to 72 (MAKQDAIEME…TKGRITYRLR (72 aa)).

This sequence belongs to the IF-1 family. Component of the 30S ribosomal translation pre-initiation complex which assembles on the 30S ribosome in the order IF-2 and IF-3, IF-1 and N-formylmethionyl-tRNA(fMet); mRNA recruitment can occur at any time during PIC assembly.

The protein localises to the cytoplasm. Its function is as follows. One of the essential components for the initiation of protein synthesis. Stabilizes the binding of IF-2 and IF-3 on the 30S subunit to which N-formylmethionyl-tRNA(fMet) subsequently binds. Helps modulate mRNA selection, yielding the 30S pre-initiation complex (PIC). Upon addition of the 50S ribosomal subunit IF-1, IF-2 and IF-3 are released leaving the mature 70S translation initiation complex. This is Translation initiation factor IF-1 from Acaryochloris marina (strain MBIC 11017).